The following is a 382-amino-acid chain: Glucose-1-phosphate adenylyltransferase (382 aa).

Alpha-D-glucose 1-phosphate is bound by residues Y100, G165, 180–181 (EK), and S191.

The protein belongs to the bacterial/plant glucose-1-phosphate adenylyltransferase family. Homotetramer.

The catalysed reaction is alpha-D-glucose 1-phosphate + ATP + H(+) = ADP-alpha-D-glucose + diphosphate. The protein operates within glycan biosynthesis; glycogen biosynthesis. Its function is as follows. Involved in the biosynthesis of ADP-glucose, a building block required for the elongation reactions to produce glycogen. Catalyzes the reaction between ATP and alpha-D-glucose 1-phosphate (G1P) to produce pyrophosphate and ADP-Glc. The sequence is that of Glucose-1-phosphate adenylyltransferase from Clostridium novyi (strain NT).